The primary structure comprises 178 residues: MPSSALLYCLILLAGVRPSRGEYPRNESNCTHFPVSQTHMLRELRAAFSQVKTFFQKKDQLDNILLTDSLQQDFKGYLGCQALSEMIQFYLVEVMPQAENHGPEIKENLNSLGEKLKTLRMQLRRCHRFLPCENKSKAVEQVKNDFNKLQEKGVYKAMNEFDIFINCIEAYMTIKMKS.

Positions 1–18 are cleaved as a signal peptide; sequence MPSSALLYCLILLAGVRP. 2 disulfide bridges follow: Cys30-Cys126 and Cys80-Cys132. The N-linked (GlcNAc...) asparagine glycan is linked to Asn134.

Belongs to the IL-10 family. As to quaternary structure, homodimer. Interacts with IL10RA and IL10RB.

Its subcellular location is the secreted. Functionally, major immune regulatory cytokine that acts on many cells of the immune system where it has profound anti-inflammatory functions, limiting excessive tissue disruption caused by inflammation. Mechanistically, IL10 binds to its heterotetrameric receptor comprising IL10RA and IL10RB leading to JAK1 and STAT2-mediated phosphorylation of STAT3. In turn, STAT3 translocates to the nucleus where it drives expression of anti-inflammatory mediators. Targets antigen-presenting cells (APCs) such as macrophages and monocytes and inhibits their release of pro-inflammatory cytokines including granulocyte-macrophage colony-stimulating factor /GM-CSF, granulocyte colony-stimulating factor/G-CSF, IL-1 alpha, IL-1 beta, IL-6, IL-8 and TNF-alpha. Also interferes with antigen presentation by reducing the expression of MHC-class II and co-stimulatory molecules, thereby inhibiting their ability to induce T cell activation. In addition, controls the inflammatory response of macrophages by reprogramming essential metabolic pathways including mTOR signaling. In Meriones unguiculatus (Mongolian jird), this protein is Interleukin-10 (IL10).